The following is a 1190-amino-acid chain: JNK-interacting protein (1190 aa).

The interval 1 to 35 (MACNLSPVNEMADSITSSTPSEIVYGGPGSPDEHR) is disordered. One can recognise an RH1 domain in the interval 24–112 (VYGGPGSPDE…QTQYEREKAL (89 aa)). A coiled-coil region spans residues 78 to 165 (LDLAYLERDE…TDHASRLEER (88 aa)). Residues 263 to 364 (DEFSSDIEPS…DDTSDDGSLG (102 aa)) are disordered. The segment covering 277–292 (PQSSADALTSPITTKE) has biased composition (polar residues). A coiled-coil region spans residues 383-491 (KNALNIVKND…EESIKWTEMQ (109 aa)). One can recognise an RH2 domain in the interval 456-542 (RKRFTRSEMQ…RASSSRGKMT (87 aa)). The tract at residues 775–829 (EDGVPTYCSNDMKPSPKRTRDFSISEVAPVDSSAPVKEDPLPPPANRPGGRAALP) is disordered.

The protein belongs to the JIP scaffold family. In terms of tissue distribution, expressed in neurons of the ventral cord, retrovesicular and preanal ganglia and nerve ring, intestinal cells, seam and hypodermal cells, body wall, head muscle and pharynx.

It localises to the cytoplasm. The protein localises to the perinuclear region. Functionally, the JNK-interacting protein (JIP) group of scaffold proteins selectively mediates JNK signaling by aggregating specific components of the MAPK cascade to form a functional JNK signaling module. May function as a regulator of synaptic vesicle transport, through interactions with the JNK-signaling components and motor proteins. Binds specific components of the JNK signaling pathway namely jnk-1, jkk-1 and sek-1. Associates with components of the motor protein, kinesin-1. Pre-assembled unc-16 scaffolding complexes are then transported as a cargo of kinesin, to the required subcellular location. Regulates the retrograde transport of autophagosomes from the neurites to the cell body of AIY interneurons. In Caenorhabditis elegans, this protein is JNK-interacting protein.